Consider the following 519-residue polypeptide: Pleckstrin homology domain-containing family A member 8 (519 aa).

The PH domain occupies 1-93; that stretch reads MEGVLYKWTN…WLVALGSAKA (93 aa). Position 139 is a phosphothreonine (Thr139). Position 145 is a phosphoserine (Ser145). The residue at position 153 (Thr153) is a Phosphothreonine. The segment at 274–302 is disordered; that stretch reads GEDNLGNHDSSLAQPASDSSSSPPESHWE. The segment covering 282–298 has biased composition (low complexity); the sequence is DSSLAQPASDSSSSPPE. The glycolipid transfer protein homology domain stretch occupies residues 310–519; it reads TFFSTMNTSF…VHGLESDEVV (210 aa).

Homodimer. Interacts with ARF1; the interaction together with phosphatidylinositol 4-phosphate binding is required for FAPP2 GlcCer transfer ability.

It localises to the golgi apparatus. It is found in the trans-Golgi network membrane. Its subcellular location is the membrane. Its function is as follows. Cargo transport protein that is required for apical transport from the trans-Golgi network (TGN). Transports AQP2 from the trans-Golgi network (TGN) to sites of AQP2 phosphorylation. Mediates the non-vesicular transport of glucosylceramide (GlcCer) from the trans-Golgi network (TGN) to the plasma membrane and plays a pivotal role in the synthesis of complex glycosphingolipids. Binding of both phosphatidylinositol 4-phosphate (PIP) and ARF1 are essential for the GlcCer transfer ability. Also required for primary cilium formation, possibly by being involved in the transport of raft lipids to the apical membrane, and for membrane tubulation. The sequence is that of Pleckstrin homology domain-containing family A member 8 (PLEKHA8) from Canis lupus familiaris (Dog).